We begin with the raw amino-acid sequence, 215 residues long: uncharacterized protein (215 aa).

A disordered region spans residues 120 to 147; the sequence is HRAPQGTSSYQEGRRAHEATSAESDDDN.

This is an uncharacterized protein from Homo sapiens (Human).